Consider the following 507-residue polypeptide: UDP-N-acetylmuramoyl-L-alanyl-D-glutamate--2,6-diaminopimelate ligase (507 aa).

S32 is a UDP-N-acetyl-alpha-D-muramoyl-L-alanyl-D-glutamate binding site. G117–T123 contributes to the ATP binding site. Residues T159–T160, S186, Q192, and R194 each bind UDP-N-acetyl-alpha-D-muramoyl-L-alanyl-D-glutamate. Position 226 is an N6-carboxylysine (K226). Residues R400, D424–R427, G475, and E479 each bind meso-2,6-diaminopimelate. Residues D424–R427 carry the Meso-diaminopimelate recognition motif motif.

Belongs to the MurCDEF family. MurE subfamily. Mg(2+) is required as a cofactor. Carboxylation is probably crucial for Mg(2+) binding and, consequently, for the gamma-phosphate positioning of ATP.

It is found in the cytoplasm. The enzyme catalyses UDP-N-acetyl-alpha-D-muramoyl-L-alanyl-D-glutamate + meso-2,6-diaminopimelate + ATP = UDP-N-acetyl-alpha-D-muramoyl-L-alanyl-gamma-D-glutamyl-meso-2,6-diaminopimelate + ADP + phosphate + H(+). The protein operates within cell wall biogenesis; peptidoglycan biosynthesis. Its function is as follows. Catalyzes the addition of meso-diaminopimelic acid to the nucleotide precursor UDP-N-acetylmuramoyl-L-alanyl-D-glutamate (UMAG) in the biosynthesis of bacterial cell-wall peptidoglycan. This Prochlorococcus marinus (strain MIT 9313) protein is UDP-N-acetylmuramoyl-L-alanyl-D-glutamate--2,6-diaminopimelate ligase.